The sequence spans 216 residues: Peptide methionine sulfoxide reductase MsrA (216 aa).

The active site involves Cys-54.

It belongs to the MsrA Met sulfoxide reductase family.

The enzyme catalyses L-methionyl-[protein] + [thioredoxin]-disulfide + H2O = L-methionyl-(S)-S-oxide-[protein] + [thioredoxin]-dithiol. It carries out the reaction [thioredoxin]-disulfide + L-methionine + H2O = L-methionine (S)-S-oxide + [thioredoxin]-dithiol. Its function is as follows. Has an important function as a repair enzyme for proteins that have been inactivated by oxidation. Catalyzes the reversible oxidation-reduction of methionine sulfoxide in proteins to methionine. In Xanthomonas campestris pv. campestris (strain ATCC 33913 / DSM 3586 / NCPPB 528 / LMG 568 / P 25), this protein is Peptide methionine sulfoxide reductase MsrA.